A 153-amino-acid chain; its full sequence is Pheromone-binding protein Gp-9 (153 aa).

A signal peptide spans 1–19; it reads MKTFVLHIFIFAFVAFASA. Cystine bridges form between cysteine 37–cysteine 77, cysteine 73–cysteine 129, and cysteine 118–cysteine 138.

The protein belongs to the PBP/GOBP family. As to quaternary structure, homodimer.

It localises to the secreted. Its function is as follows. Colony queen number, a major feature of social organization, is associated with worker genotype for Gp-9. Colonies are headed by either a single reproductive queen (monogyne form) or multiple queens (polygyne form). Differences in worker Gp-9 genotypes between social forms may cause differences in workers' abilities to recognize queens and regulate their numbers. The polypeptide is Pheromone-binding protein Gp-9 (Solenopsis geminata (Tropical fire ant)).